The following is a 347-amino-acid chain: Transcription termination/antitermination protein NusA (347 aa).

The 73-residue stretch at 112–184 (GEIVAGVIQR…REPLITLSRT (73 aa)) folds into the S1 motif domain. Residues 287-347 (ARAARVVVPD…GVSRGMAHDR (61 aa)) form the KH domain. Positions 322 to 347 (DIRGDAPPPPPGQPEPGVSRGMAHDR) are disordered.

This sequence belongs to the NusA family. Monomer. Binds directly to the core enzyme of the DNA-dependent RNA polymerase and to nascent RNA.

Its subcellular location is the cytoplasm. Functionally, participates in both transcription termination and antitermination. The chain is Transcription termination/antitermination protein NusA from Mycobacterium bovis (strain ATCC BAA-935 / AF2122/97).